The sequence spans 377 residues: Succinyl-diaminopimelate desuccinylase (377 aa).

Histidine 66 contributes to the Zn(2+) binding site. Aspartate 68 is a catalytic residue. Aspartate 99 lines the Zn(2+) pocket. Catalysis depends on glutamate 133, which acts as the Proton acceptor. The Zn(2+) site is built by glutamate 134, glutamate 162, and histidine 348.

This sequence belongs to the peptidase M20A family. DapE subfamily. In terms of assembly, homodimer. Requires Zn(2+) as cofactor. Co(2+) serves as cofactor.

It catalyses the reaction N-succinyl-(2S,6S)-2,6-diaminopimelate + H2O = (2S,6S)-2,6-diaminopimelate + succinate. It participates in amino-acid biosynthesis; L-lysine biosynthesis via DAP pathway; LL-2,6-diaminopimelate from (S)-tetrahydrodipicolinate (succinylase route): step 3/3. Functionally, catalyzes the hydrolysis of N-succinyl-L,L-diaminopimelic acid (SDAP), forming succinate and LL-2,6-diaminopimelate (DAP), an intermediate involved in the bacterial biosynthesis of lysine and meso-diaminopimelic acid, an essential component of bacterial cell walls. The polypeptide is Succinyl-diaminopimelate desuccinylase (Chromobacterium violaceum (strain ATCC 12472 / DSM 30191 / JCM 1249 / CCUG 213 / NBRC 12614 / NCIMB 9131 / NCTC 9757 / MK)).